A 99-amino-acid polypeptide reads, in one-letter code: Prostate and testis expressed protein 14 (99 aa).

The signal sequence occupies residues 1–21 (MEKYLLLLLLGIFLRVGFLQA). Positions 22-99 (LTCVSCGRLN…CDHQNLCNKP (78 aa)) constitute a UPAR/Ly6 domain. Disulfide bonds link Cys24-Cys51, Cys27-Cys36, Cys43-Cys69, Cys73-Cys89, and Cys90-Cys96. N-linked (GlcNAc...) asparagine glycosylation is present at Asn31. An N-linked (GlcNAc...) asparagine glycan is attached at Asn75.

Belongs to the PATE family. As to quaternary structure, monomer. In terms of processing, glycosylated. As to expression, predominantly expressed in the seminal vesicles. Expressed in prostate, and to a lesser extent in the cauda epididymis.

The protein resides in the secreted. This is Prostate and testis expressed protein 14 from Mus musculus (Mouse).